Reading from the N-terminus, the 91-residue chain is Putative regulatory protein DSY2730 (91 aa).

It belongs to the RemA family.

This is Putative regulatory protein DSY2730 from Desulfitobacterium hafniense (strain Y51).